The chain runs to 464 residues: tRNA-2-methylthio-N(6)-dimethylallyladenosine synthase (464 aa).

An MTTase N-terminal domain is found at 19 to 135; that stretch reads GSYWITTFGC…LENLLGKVDL (117 aa). Residues Cys28, Cys64, Cys98, Cys170, Cys174, and Cys177 each coordinate [4Fe-4S] cluster. The region spanning 156 to 394 is the Radical SAM core domain; sequence RESSICGWVN…DLVEKTARSR (239 aa). Positions 396–464 constitute a TRAM domain; it reads QRYIDNIESV…PFSLTGELSL (69 aa).

The protein belongs to the methylthiotransferase family. MiaB subfamily. As to quaternary structure, monomer. [4Fe-4S] cluster is required as a cofactor.

The protein localises to the cytoplasm. The catalysed reaction is N(6)-dimethylallyladenosine(37) in tRNA + (sulfur carrier)-SH + AH2 + 2 S-adenosyl-L-methionine = 2-methylsulfanyl-N(6)-dimethylallyladenosine(37) in tRNA + (sulfur carrier)-H + 5'-deoxyadenosine + L-methionine + A + S-adenosyl-L-homocysteine + 2 H(+). Its function is as follows. Catalyzes the methylthiolation of N6-(dimethylallyl)adenosine (i(6)A), leading to the formation of 2-methylthio-N6-(dimethylallyl)adenosine (ms(2)i(6)A) at position 37 in tRNAs that read codons beginning with uridine. The polypeptide is tRNA-2-methylthio-N(6)-dimethylallyladenosine synthase (Prochlorococcus marinus (strain MIT 9301)).